The chain runs to 571 residues: Cilia- and flagella-associated protein 52 (571 aa).

10 WD repeats span residues 62–106, 109–150, 156–195, 288–327, 330–364, 366–405, 410–449, 451–490, 494–533, and 536–571; these read GHGN…LLAR, LHKG…AICG, LNVG…RKIW, QSQG…ETLI, CHFE…TSSN, AHRI…QKLE, EHKS…RNQM, LANT…VIRE, SLSG…VTHV, and GHSG…PYTS.

It belongs to the CFAP52 family. In terms of assembly, microtubule inner protein component of sperm flagellar doublet microtubules. Interacts with BRCA2. Interacts with the CCT chaperonin complex. Interacts with HSP70. Interacts with AK8. Interacts with CFAP45. Interacts with DNAI1. Interacts with IQDC.

It is found in the cytoplasm. It localises to the cytoskeleton. The protein resides in the cilium axoneme. The protein localises to the flagellum axoneme. Microtubule inner protein (MIP) part of the dynein-decorated doublet microtubules (DMTs) in cilia axoneme. Important for proper ciliary and flagellar beating. May act in cooperation with CFAP45 and axonemal dynein subunit DNAH11. May play a role in cell growth and/or survival. This is Cilia- and flagella-associated protein 52 from Macaca fascicularis (Crab-eating macaque).